Reading from the N-terminus, the 223-residue chain is Large ribosomal subunit protein bL25 (223 aa).

The tract at residues 198-223 is disordered; sequence EEIGDRPRSAEEGAAPVKERKLRESE.

This sequence belongs to the bacterial ribosomal protein bL25 family. CTC subfamily. Part of the 50S ribosomal subunit; part of the 5S rRNA/L5/L18/L25 subcomplex. Contacts the 5S rRNA. Binds to the 5S rRNA independently of L5 and L18.

Its function is as follows. This is one of the proteins that binds to the 5S RNA in the ribosome where it forms part of the central protuberance. This Thermomicrobium roseum (strain ATCC 27502 / DSM 5159 / P-2) protein is Large ribosomal subunit protein bL25.